Consider the following 856-residue polypeptide: Dual specificity protein kinase TTK (856 aa).

Methionine 1 is modified (N-acetylmethionine). Threonine 32 bears the Phosphothreonine mark. Residues serine 36, serine 277, and serine 342 each carry the phosphoserine modification. The residue at position 380 (threonine 380) is a Phosphothreonine. Serine 383, serine 435, and serine 454 each carry phosphoserine. In terms of domain architecture, Protein kinase spans 524 to 790 (YSILKQIGSG…IPELLTHPYV (267 aa)). Residues 530-538 (IGSGGSSKV) and lysine 552 each bind ATP. Aspartate 646 acts as the Proton acceptor in catalysis. Serine 820 is modified (phosphoserine). The interval 837–856 (CGEGQDSSSSKTFDKKRERK) is disordered.

This sequence belongs to the protein kinase superfamily. Ser/Thr protein kinase family. In terms of assembly, interacts with TPR; the interactions occurs in a microtubule-independent manner. Interacts with MAD1L1 and MAD2L1. Post-translationally, autophosphorylated. In terms of tissue distribution, present in rapidly proliferating cell lines; high levels in testis, bone marrow, spleen and thymus. Low levels in brain, heart, lung and kidney.

It carries out the reaction L-seryl-[protein] + ATP = O-phospho-L-seryl-[protein] + ADP + H(+). The enzyme catalyses L-threonyl-[protein] + ATP = O-phospho-L-threonyl-[protein] + ADP + H(+). The catalysed reaction is L-tyrosyl-[protein] + ATP = O-phospho-L-tyrosyl-[protein] + ADP + H(+). Its activity is regulated as follows. Inhibited by the ATP-competitive kinase inhibitor, SP600125. Its function is as follows. Involved in mitotic spindle assembly checkpoint signaling, a process that delays anaphase until chromosomes are bioriented on the spindle, and in the repair of incorrect mitotic kinetochore-spindle microtubule attachments. Phosphorylates MAD1L1 to promote the mitotic spindle assembly checkpoint. Phosphorylates CDCA8/Borealin leading to enhanced AURKB activity at the kinetochore. Phosphorylates SKA3 at 'Ser-34' leading to dissociation of the SKA complex from microtubules and destabilization of microtubule-kinetochore attachments. Phosphorylates KNL1, KNTC1 and autophosphorylates. Phosphorylates MCRS1 which enhances recruitment of KIF2A to the minus end of spindle microtubules and promotes chromosome alignment. This is Dual specificity protein kinase TTK (Ttk) from Mus musculus (Mouse).